The chain runs to 585 residues: A-type ATP synthase subunit A (585 aa).

231–238 (GPFGSGKT) lines the ATP pocket.

Belongs to the ATPase alpha/beta chains family. In terms of assembly, has multiple subunits with at least A(3), B(3), C, D, E, F, H, I and proteolipid K(x).

The protein localises to the cell membrane. It carries out the reaction ATP + H2O + 4 H(+)(in) = ADP + phosphate + 5 H(+)(out). Produces ATP from ADP in the presence of a proton gradient across the membrane. The archaeal alpha chain is a catalytic subunit. In terms of biological role, component of the A-type ATP synthase that produces ATP from ADP in the presence of a proton gradient across the membrane. The A chain is the catalytic subunit. The protein is A-type ATP synthase subunit A of Thermococcus sp. (strain KI).